Consider the following 364-residue polypeptide: Probable zinc transporter 10 (364 aa).

An N-terminal signal peptide occupies residues 1–28 (MTKSHVIFSASIALFLLLSISHFPGALS). Over 29 to 52 (QSNKDCQSKSNYSCIDKNKALDLK) the chain is Extracellular. A helical membrane pass occupies residues 53 to 73 (LLSIFSILITSLIGVCLPFFA). The Cytoplasmic segment spans residues 74 to 85 (RSIPAFQPEKSH). The helical transmembrane segment at 86 to 106 (FLIVKSFASGIILSTGFMHVL) threads the bilayer. The Extracellular portion of the chain corresponds to 107 to 125 (PDSFEMLSSPCLNDNPWHK). Residues 126 to 146 (FPFAGFVAMMSAVFTLMVDSI) traverse the membrane as a helical segment. At 147-209 (TTSVFTKSGR…GSYLQLLRYR (63 aa)) the chain is on the cytoplasmic side. A helical membrane pass occupies residues 210–230 (ILAIVLELGIVVQSIVIGLSV). Residues 231–241 (GDTNNTCTIKG) are Extracellular-facing. Residues 242-262 (LVAALCFHQMFEGMGLGGCIL) form a helical membrane-spanning segment. At 263 to 271 (QAEYGWVKK) the chain is on the cytoplasmic side. A helical membrane pass occupies residues 272–292 (AVMAFFFAVTTPFGVVLGMAL). The Extracellular portion of the chain corresponds to 293–303 (SKTYKENSPES). Residues 304-324 (LITVGLLNASSAGLLIYMALV) traverse the membrane as a helical segment. Over 325-343 (DLLAADFMGQKMQRSIKLQ) the chain is Cytoplasmic. Residues 344–364 (LKSYAAVLLGAGGMSVMAKWA) traverse the membrane as a helical segment.

The protein belongs to the ZIP transporter (TC 2.A.5) family.

The protein resides in the cell membrane. Functionally, probably mediates zinc uptake from the rhizosphere. The sequence is that of Probable zinc transporter 10 (ZIP10) from Arabidopsis thaliana (Mouse-ear cress).